The primary structure comprises 102 residues: Small ribosomal subunit protein uS10 (102 aa).

Belongs to the universal ribosomal protein uS10 family. As to quaternary structure, part of the 30S ribosomal subunit.

In terms of biological role, involved in the binding of tRNA to the ribosomes. This chain is Small ribosomal subunit protein uS10, found in Mycoplasma capricolum subsp. capricolum (strain California kid / ATCC 27343 / NCTC 10154).